A 303-amino-acid chain; its full sequence is Thyrotroph embryonic factor (303 aa).

2 disordered regions span residues 1 to 63 and 132 to 176; these read MSDA…KLEE and ESAS…DPNC. The residue at position 32 (Ser32) is a Phosphoserine. The span at 41-61 shows a compositional bias: basic and acidic residues; it reads KLMENPPREARLDKEKGKEKL. The span at 133–160 shows a compositional bias: low complexity; sequence SASSSTASPPSSSTAIFQPSETVSSTES. Residues 233 to 296 enclose the bZIP domain; sequence DEKYWTRRKK…GKCKTIVSKY (64 aa). Positions 235–255 are basic motif; the sequence is KYWTRRKKNNVAAKRSRDARR. The tract at residues 256 to 263 is leucine-zipper; that stretch reads LKENQITI.

It belongs to the bZIP family. PAR subfamily. Binds DNA as a homodimer or a heterodimer. Can form a heterodimer with DBP.

Its subcellular location is the nucleus. Transcription factor that binds to and transactivates the TSHB promoter. Binds to a minimal DNA-binding sequence 5'-[TC][AG][AG]TTA[TC][AG]-3'. In Homo sapiens (Human), this protein is Thyrotroph embryonic factor (TEF).